Reading from the N-terminus, the 427-residue chain is Inward rectifier potassium channel 2 (427 aa).

Residues Met-1 to Trp-81 lie on the Cytoplasmic side of the membrane. Cys-76 is modified (S-nitrosocysteine). A helical membrane pass occupies residues Arg-82 to Ile-106. Topologically, residues Ala-107 to Ser-128 are extracellular. The segment at residues Phe-129 to Gln-140 is an intramembrane region (helical; Pore-forming). Residues Thr-141–Phe-147 constitute an intramembrane region (pore-forming). Residues Thr-142–Phe-147 carry the Selectivity filter motif. Over Arg-148–Val-156 the chain is Extracellular. The helical transmembrane segment at Ala-157 to Ala-178 threads the bilayer. At Val-179 to Ile-427 the chain is on the cytoplasmic side. The interval Ala-181–Leu-208 is polyphosphoinositide (PIP2)-binding. The disordered stretch occupies residues Ser-384 to Ile-427. The PDZ-binding motif lies at Ser-425–Ile-427.

The protein belongs to the inward rectifier-type potassium channel (TC 1.A.2.1) family. KCNJ2 subfamily. Homotetramer. Homomultimeric and heteromultimeric association with KCNJ4/Kir2.3. Can form heteromeric channels with Kir2.6/KCNJ18. Associates, via its PDZ-recognition domain, with a complex containing LIN7A, LIN7B, LIN7C, DLG1, CASK and APBA1. Post-translationally, S-nitrosylation increases the open probability and inward rectifying currents.

The protein resides in the cell membrane. It localises to the sarcolemma. It is found in the T-tubule. The catalysed reaction is K(+)(in) = K(+)(out). Activated by phosphatidylinositol 4,5 biphosphate (PtdIns(4,5)P2). In terms of biological role, inward rectifier potassium channels are characterized by a greater tendency to allow potassium to flow into the cell rather than out of it. Their voltage dependence is regulated by the concentration of extracellular potassium; as external potassium is raised, the voltage range of the channel opening shifts to more positive voltages. The inward rectification is mainly due to the blockage of outward current by internal magnesium. Blocked by external barium or cesium. Probably participates in establishing action potential waveform and excitability of neuronal and muscle tissues. The polypeptide is Inward rectifier potassium channel 2 (KCNJ2) (Canis lupus familiaris (Dog)).